A 134-amino-acid chain; its full sequence is DNA-binding protein inhibitor ID-2 (134 aa).

Residues serine 14 and serine 25 each carry the phosphoserine modification. The 53-residue stretch at 23 to 75 (SRSKTPVDDPMSLLYNMNDCYSKLKELVPSIPQNKKVSKMEILQHVIDYILDL) folds into the bHLH domain. The Nuclear export signal motif lies at 106-115 (LNTDISILSL).

Interacts with GATA4 and NKX2-5. Interacts with NR0B2. Interacts with CLOCK and BMAL1. Interacts with IFI204. Interacts with NEDD9/HEF1. Interacts with ASB4; this interaction promotes ID2 proteasomal degradation. Post-translationally, ubiquitinated in a ASB4-depedent manner, leading to proteasomal degradation. In terms of processing, phosphorylated in vitro by CDK1, PKA and PKC. Highly expressed in early fetal tissues, including those of the central nervous system.

The protein localises to the cytoplasm. It localises to the nucleus. Transcriptional regulator (lacking a basic DNA binding domain) which negatively regulates the basic helix-loop-helix (bHLH) transcription factors by forming heterodimers and inhibiting their DNA binding and transcriptional activity. Implicated in regulating a variety of cellular processes, including cellular growth, senescence, differentiation, apoptosis, angiogenesis, and neoplastic transformation. Inhibits skeletal muscle and cardiac myocyte differentiation. Regulates the circadian clock by repressing the transcriptional activator activity of the CLOCK-BMAL1 heterodimer. Restricts the CLOCK and BMAL1 localization to the cytoplasm. Plays a role in both the input and output pathways of the circadian clock: in the input component, is involved in modulating the magnitude of photic entrainment and in the output component, contributes to the regulation of a variety of liver clock-controlled genes involved in lipid metabolism. This is DNA-binding protein inhibitor ID-2 (ID2) from Homo sapiens (Human).